The chain runs to 308 residues: Ectoine dioxygenase (308 aa).

Glutamine 131 is a binding site for L-ectoine. Lysine 137 lines the 2-oxoglutarate pocket. The Fe cation site is built by histidine 148, aspartate 150, and histidine 249.

It belongs to the PhyH family. EctD subfamily. Homodimer. It depends on Fe(2+) as a cofactor.

It carries out the reaction L-ectoine + 2-oxoglutarate + O2 = 5-hydroxyectoine + succinate + CO2. Its function is as follows. Involved in the biosynthesis of 5-hydroxyectoine, called compatible solute, which helps organisms to survive extreme osmotic stress by acting as a highly soluble organic osmolyte. Catalyzes the 2-oxoglutarate-dependent selective hydroxylation of L-ectoine to yield (4S,5S)-5-hydroxyectoine. In Bordetella parapertussis (strain 12822 / ATCC BAA-587 / NCTC 13253), this protein is Ectoine dioxygenase.